Here is a 296-residue protein sequence, read N- to C-terminus: Diheme cytochrome c-type (296 aa).

Cys-52, Cys-55, His-56, Cys-202, Cys-205, and His-206 together coordinate heme c.

Post-translationally, binds 2 heme c groups covalently per subunit.

The protein localises to the cell membrane. Particularly expressed when cells generate energy via aerobic respiration. The sequence is that of Diheme cytochrome c-type (cycG) from Cereibacter sphaeroides (strain ATCC 17023 / DSM 158 / JCM 6121 / CCUG 31486 / LMG 2827 / NBRC 12203 / NCIMB 8253 / ATH 2.4.1.) (Rhodobacter sphaeroides).